Reading from the N-terminus, the 638-residue chain is 1,4-alpha-glucan branching enzyme GlgB (638 aa).

D303 acts as the Nucleophile in catalysis. Residue E356 is the Proton donor of the active site.

It belongs to the glycosyl hydrolase 13 family. GlgB subfamily. In terms of assembly, monomer.

The enzyme catalyses Transfers a segment of a (1-&gt;4)-alpha-D-glucan chain to a primary hydroxy group in a similar glucan chain.. It participates in glycan biosynthesis; glycogen biosynthesis. Functionally, catalyzes the formation of the alpha-1,6-glucosidic linkages in glycogen by scission of a 1,4-alpha-linked oligosaccharide from growing alpha-1,4-glucan chains and the subsequent attachment of the oligosaccharide to the alpha-1,6 position. This Lactobacillus acidophilus (strain ATCC 700396 / NCK56 / N2 / NCFM) protein is 1,4-alpha-glucan branching enzyme GlgB.